The primary structure comprises 75 residues: Small ribosomal subunit protein bS18 (75 aa).

This sequence belongs to the bacterial ribosomal protein bS18 family. As to quaternary structure, part of the 30S ribosomal subunit. Forms a tight heterodimer with protein bS6.

Binds as a heterodimer with protein bS6 to the central domain of the 16S rRNA, where it helps stabilize the platform of the 30S subunit. This is Small ribosomal subunit protein bS18 from Mycoplasma mycoides subsp. mycoides SC (strain CCUG 32753 / NCTC 10114 / PG1).